The primary structure comprises 319 residues: tRNA dimethylallyltransferase (319 aa).

10-17 contributes to the ATP binding site; that stretch reads GPTAVGKT. 12–17 contacts substrate; sequence TAVGKT. Residues 35-38 form an interaction with substrate tRNA region; the sequence is DSMQ.

The protein belongs to the IPP transferase family. In terms of assembly, monomer. The cofactor is Mg(2+).

The catalysed reaction is adenosine(37) in tRNA + dimethylallyl diphosphate = N(6)-dimethylallyladenosine(37) in tRNA + diphosphate. In terms of biological role, catalyzes the transfer of a dimethylallyl group onto the adenine at position 37 in tRNAs that read codons beginning with uridine, leading to the formation of N6-(dimethylallyl)adenosine (i(6)A). This is tRNA dimethylallyltransferase from Symbiobacterium thermophilum (strain DSM 24528 / JCM 14929 / IAM 14863 / T).